The following is a 466-amino-acid chain: 55 kDa erythrocyte membrane protein (466 aa).

An N-acetylthreonine modification is found at threonine 2. Phosphoserine occurs at positions 13 and 19. The residue at position 49 (threonine 49) is a Phosphothreonine. 3 positions are modified to phosphoserine: serine 52, serine 57, and serine 110. Residues 71-152 (LIQFEKVTEE…MISLKVIPNQ (82 aa)) form the PDZ domain. The region spanning 158–228 (ALQMFMRAQF…PSPELQEWRV (71 aa)) is the SH3 domain. A Phosphoserine modification is found at serine 243. The tract at residues 268 to 466 (VVSYEEVVRL…PQWVPVSWVY (199 aa)) is interaction with PALS1. Residues 282–451 (RKTLVLIGAS…TLKKLQEAFD (170 aa)) enclose the Guanylate kinase-like domain.

Belongs to the MAGUK family. As to quaternary structure, heterodimer with PALS1. Interacts with DLG5 and NF2. Interacts (via guanylate kinase-like domain) with WHRN (via third PDZ domain). In terms of processing, palmitoylated.

The protein resides in the cell membrane. It localises to the cell projection. The protein localises to the stereocilium. Essential regulator of neutrophil polarity. Regulates neutrophil polarization by regulating AKT1 phosphorylation through a mechanism that is independent of PIK3CG activity. The sequence is that of 55 kDa erythrocyte membrane protein (MPP1) from Pongo abelii (Sumatran orangutan).